A 209-amino-acid polypeptide reads, in one-letter code: Large ribosomal subunit protein uL3 (209 aa).

N5-methylglutamine is present on Gln-150.

This sequence belongs to the universal ribosomal protein uL3 family. As to quaternary structure, part of the 50S ribosomal subunit. Forms a cluster with proteins L14 and L19. Post-translationally, methylated by PrmB.

One of the primary rRNA binding proteins, it binds directly near the 3'-end of the 23S rRNA, where it nucleates assembly of the 50S subunit. The chain is Large ribosomal subunit protein uL3 from Citrobacter koseri (strain ATCC BAA-895 / CDC 4225-83 / SGSC4696).